The primary structure comprises 308 residues: Glutamyl-Q tRNA(Asp) synthetase (308 aa).

L-glutamate is bound by residues 19-23 (RFAPS) and Glu-55. Positions 22 to 32 (PSPSGELHFGS) match the 'HIGH' region motif. 4 residues coordinate Zn(2+): Cys-111, Cys-113, Tyr-125, and Cys-129. Residues Tyr-182 and Arg-200 each contribute to the L-glutamate site. Positions 238–242 (KLSKQ) match the 'KMSKS' region motif. Lys-241 is a binding site for ATP.

This sequence belongs to the class-I aminoacyl-tRNA synthetase family. GluQ subfamily. Zn(2+) is required as a cofactor.

Its function is as follows. Catalyzes the tRNA-independent activation of glutamate in presence of ATP and the subsequent transfer of glutamate onto a tRNA(Asp). Glutamate is transferred on the 2-amino-5-(4,5-dihydroxy-2-cyclopenten-1-yl) moiety of the queuosine in the wobble position of the QUC anticodon. The polypeptide is Glutamyl-Q tRNA(Asp) synthetase (Escherichia coli O157:H7).